A 167-amino-acid polypeptide reads, in one-letter code: Peptidoglycan-binding-like protein (167 aa).

An N-terminal signal peptide occupies residues 1-24 (MRSPKVKFLTIFTLSILITKMSFA).

This sequence belongs to the IagB/IpgF/P19 family.

The protein localises to the periplasm. This chain is Peptidoglycan-binding-like protein (pbl), found in Escherichia coli O157:H7.